A 30-amino-acid polypeptide reads, in one-letter code: Protein ScvA (30 aa).

The segment at 1 to 30 is disordered; that stretch reads MERQNVQQQRGKDQRPQRPGASNPRRPNQR.

Its function is as follows. Might be involved in DNA-binding; the protein binds DNA in gel-shift assays and immunogold electron microscopy shows labelling of condensed chromatin. This chain is Protein ScvA (scvA), found in Coxiella burnetii (strain RSA 493 / Nine Mile phase I).